A 485-amino-acid polypeptide reads, in one-letter code: REST corepressor 1 (485 aa).

Disordered stretches follow at residues 1 to 26 and 49 to 110; these read MPAMVEKGPEVSGKRRGRNNAAASAS and AAAS…VGPQ. 2 stretches are compositionally biased toward low complexity: residues 49–64 and 74–95; these read AAASSASAAAASAAAA and AAAAPNGNSSSNSWEEGSSGSS. The interaction with HDAC1 stretch occupies residues 78-257; that stretch reads PNGNSSSNSW…RHARKQKRER (180 aa). The 87-residue stretch at 103–189 folds into the ELM2 domain; it reads GGMRVGPQYQ…KSLADLPNFT (87 aa). Lys-122 participates in a covalent cross-link: Glycyl lysine isopeptide (Lys-Gly) (interchain with G-Cter in SUMO2). Ser-127 is modified (phosphoserine). One can recognise an SANT 1 domain in the interval 190–241; that stretch reads PFPDEWTVEDKVLFEQAFSFHGKTFHRIQQMLPDKSIASLVKFYYSWKKTRT. Residues 244-273 are a coiled coil; sequence SVMDRHARKQKREREESEDELEEANGNNPI. The disordered stretch occupies residues 244–314; it reads SVMDRHARKQ…AKNRAKRKPP (71 aa). The residue at position 260 (Ser-260) is a Phosphoserine. A compositionally biased stretch (basic and acidic residues) spans 278–288; that stretch reads DQNKESKKEVP. Residues 296-384 form an interaction with KDM1A region; sequence VKKEKHSTQA…LPEVIQKCNA (89 aa). A Glycyl lysine isopeptide (Lys-Gly) (interchain with G-Cter in SUMO2) cross-link involves residue Lys-297. Positions 334-369 form a coiled coil; sequence ATTVLRQLDMELVSVKRQIQNIKQTNSALKEKLDGG. Residues 381-432 form the SANT 2 domain; it reads KCNARWTTEEQLLAVQAIRKYGRDFQAISDVIGNKSVVQVKNFFVNYRRRFN. A disordered region spans residues 442–485; it reads AEHGKEETNGPSNQKPVKSPDNSIKMPEEEDEAPVLDVRYASAS. Residues 450 to 463 show a composition bias toward polar residues; it reads NGPSNQKPVKSPDN. Ser-460 carries the phosphoserine modification. Lys-466 participates in a covalent cross-link: Glycyl lysine isopeptide (Lys-Gly) (interchain with G-Cter in SUMO2).

It belongs to the CoREST family. As to quaternary structure, interacts directly with GFI1 and GFI1B in a RCOR/GFI/KDM1A/HDAC complex. Interacts with INMS1. Component of a BHC histone deacetylase complex that contains HDAC1, HDAC2, HMG20B/BRAF35, KDM1A, RCOR1/CoREST and PHF21A/BHC80. The BHC complex may also contain ZMYM2, ZNF217, ZMYM3, GSE1 and GTF2I. Interacts with REST. Interacts with the SMARCE1/BAF57, suggesting that the BHC complex may recruit the ATP-dependent chromatin-remodeling SWI-SNF complex. Interacts with SOX2. (Microbial infection) Interacts with herpes virus HSV-1 ICP0 protein; the interaction leads to the disruption of the BHC complex, thereby preventing the BHC complex from repressing transcription of viral genes. Phosphorylated by HSV-1 protein kinases in case of infection. In terms of tissue distribution, ubiquitously expressed.

The protein resides in the nucleus. Essential component of the BHC complex, a corepressor complex that represses transcription of neuron-specific genes in non-neuronal cells. The BHC complex is recruited at RE1/NRSE sites by REST and acts by deacetylating and demethylating specific sites on histones, thereby acting as a chromatin modifier. In the BHC complex, it serves as a molecular beacon for the recruitment of molecular machinery, including MeCP2 and SUV39H1, that imposes silencing across a chromosomal interval. Plays a central role in demethylation of Lys-4 of histone H3 by promoting demethylase activity of KDM1A on core histones and nucleosomal substrates. It also protects KDM1A from the proteasome. Component of a RCOR/GFI/KDM1A/HDAC complex that suppresses, via histone deacetylase (HDAC) recruitment, a number of genes implicated in multilineage blood cell development and controls hematopoietic differentiation. The protein is REST corepressor 1 (RCOR1) of Homo sapiens (Human).